The primary structure comprises 598 residues: Nicotinamide riboside transporter 1 (598 aa).

The next 11 helical transmembrane spans lie at leucine 48–leucine 68, glycine 71–phenylalanine 91, phenylalanine 112–valine 132, leucine 174–histidine 194, tyrosine 197–leucine 217, alanine 241–asparagine 261, leucine 273–phenylalanine 293, glycine 372–serine 392, phenylalanine 395–cysteine 415, alanine 447–asparagine 467, and serine 484–phenylalanine 504. Residues serine 560 and serine 572 each carry the phosphoserine modification.

The protein belongs to the purine-cytosine permease (2.A.39) family.

Its subcellular location is the cell membrane. In terms of biological role, high-affinity pH-dependent nicotinamide riboside transporter which also transports thiamine with low affinity. Involved in 5-fluorocytosine sensitivity. In Saccharomyces cerevisiae (strain ATCC 204508 / S288c) (Baker's yeast), this protein is Nicotinamide riboside transporter 1 (NRT1).